The primary structure comprises 372 residues: Transcription factor MYB80 (372 aa).

HTH myb-type domains lie at 9–65 and 66–116; these read KDNV…RPDL and KHGE…KKKL. 2 consecutive DNA-binding regions (H-T-H motif) follow at residues 37–61 and 89–112; these read WRLI…TNYL and WSVI…NTKL. Residues 298-311 are compositionally biased toward polar residues; that stretch reads MWSHQSLYSGSSGT. Residues 298–347 are disordered; that stretch reads MWSHQSLYSGSSGTEEARRELPEKGNDSVGSSGGDDDAADDGKDSGKGAA. Residues 312-323 are compositionally biased toward basic and acidic residues; sequence EEARRELPEKGN.

The protein resides in the nucleus. Functionally, essential for tapetum development in anthers and microsporogenesis. May regulate the timing of tapetal programmed cell death (PCD) which is critical for pollen development. In Oryza sativa subsp. japonica (Rice), this protein is Transcription factor MYB80.